The sequence spans 446 residues: tRNA modification GTPase MnmE (446 aa).

(6S)-5-formyl-5,6,7,8-tetrahydrofolate-binding residues include R22, E80, and R119. The region spanning 215–370 (GFKVAIIGKP…LILALENIMN (156 aa)) is the TrmE-type G domain. Position 225 (N225) interacts with K(+). GTP contacts are provided by residues 225–230 (NVGKSS), 244–250 (SDIAGTT), and 269–272 (DTAG). A Mg(2+)-binding site is contributed by S229. K(+) is bound by residues S244, I246, and T249. Residue T250 coordinates Mg(2+). K446 lines the (6S)-5-formyl-5,6,7,8-tetrahydrofolate pocket.

The protein belongs to the TRAFAC class TrmE-Era-EngA-EngB-Septin-like GTPase superfamily. TrmE GTPase family. In terms of assembly, homodimer. Heterotetramer of two MnmE and two MnmG subunits. The cofactor is K(+).

It localises to the cytoplasm. Exhibits a very high intrinsic GTPase hydrolysis rate. Involved in the addition of a carboxymethylaminomethyl (cmnm) group at the wobble position (U34) of certain tRNAs, forming tRNA-cmnm(5)s(2)U34. The sequence is that of tRNA modification GTPase MnmE from Sulfurimonas denitrificans (strain ATCC 33889 / DSM 1251) (Thiomicrospira denitrificans (strain ATCC 33889 / DSM 1251)).